The chain runs to 65 residues: Large ribosomal subunit protein bL35 (65 aa).

Residues 1–16 (MPKQKTHRASAKRFKR) show a composition bias toward basic residues. The interval 1-20 (MPKQKTHRASAKRFKRTGSG) is disordered.

This sequence belongs to the bacterial ribosomal protein bL35 family.

This chain is Large ribosomal subunit protein bL35, found in Streptococcus equi subsp. equi (strain 4047).